The chain runs to 387 residues: Patatin-08 (387 aa).

The signal sequence occupies residues 1–23; sequence MATTKSFLILIVMILATTSSTFA. Residues 32-230 form the PNPLA domain; the sequence is LSIDGGGIKG…TVADPALLSI (199 aa). The GXGXXG motif lies at 36–41; that stretch reads GGGIKG. Residues 75-79 carry the GXSXG motif; the sequence is GTSTG. Ser-77 functions as the Nucleophile in the catalytic mechanism. An N-linked (GlcNAc...) asparagine glycan is attached at Asn-115. Asp-216 (proton acceptor) is an active-site residue. A DGA/G motif is present at residues 216-218; the sequence is DGA. Residues 361 to 385 adopt a coiled-coil conformation; sequence ETYEEALKRFAKLLSDRKKLRANKA.

Belongs to the patatin family. In terms of tissue distribution, tuber.

It is found in the vacuole. In terms of biological role, probable lipolytic acyl hydrolase (LAH), an activity which is thought to be involved in the response of tubers to pathogens. In Solanum tuberosum (Potato), this protein is Patatin-08.